The primary structure comprises 102 residues: Cysteine-rich venom protein VAR9 (102 aa).

The signal sequence occupies residues 1–19; sequence MILLKLYLTLAAILCQSRG. An SCP domain is found at 41–80; it reads NKHNDLRRTVDPPAKNMLKMSWDNIIAESAKRAALRCNYK.

Belongs to the CRISP family. Post-translationally, contains 8 disulfide bonds. Expressed by the venom gland.

It is found in the secreted. Functionally, blocks ryanodine receptors, and potassium channels. The sequence is that of Cysteine-rich venom protein VAR9 from Varanus varius (Lace monitor lizard).